Here is a 362-residue protein sequence, read N- to C-terminus: Chorismate synthase (362 aa).

Residues R48 and R54 each contribute to the NADP(+) site. FMN-binding positions include 131-133, 243-244, G287, 302-306, and R328; these read RSS, NA, and KPTSS.

Belongs to the chorismate synthase family. In terms of assembly, homotetramer. Requires FMNH2 as cofactor.

It catalyses the reaction 5-O-(1-carboxyvinyl)-3-phosphoshikimate = chorismate + phosphate. It participates in metabolic intermediate biosynthesis; chorismate biosynthesis; chorismate from D-erythrose 4-phosphate and phosphoenolpyruvate: step 7/7. Its function is as follows. Catalyzes the anti-1,4-elimination of the C-3 phosphate and the C-6 proR hydrogen from 5-enolpyruvylshikimate-3-phosphate (EPSP) to yield chorismate, which is the branch point compound that serves as the starting substrate for the three terminal pathways of aromatic amino acid biosynthesis. This reaction introduces a second double bond into the aromatic ring system. The polypeptide is Chorismate synthase (Bradyrhizobium diazoefficiens (strain JCM 10833 / BCRC 13528 / IAM 13628 / NBRC 14792 / USDA 110)).